Here is a 476-residue protein sequence, read N- to C-terminus: Variant surface glycoprotein MITAT 1.2 (476 aa).

Residues 1 to 26 (MPSNQEARLFLAVLVLAQVLPILVDS) form the signal peptide. Disulfide bonds link C41–C171 and C149–C213. N-linked (GlcNAc...) asparagine glycosylation occurs at N289. Disordered regions lie at residues 389-418 (QKHK…CKSP) and 435-459 (EEAK…TGSS). Intrachain disulfides connect C407-C419 and C415-C430. The span at 435–449 (EEAKKVADETAKDGK) shows a compositional bias: basic and acidic residues. Low complexity predominate over residues 450–459 (TGNTNTTGSS). N454 carries N-linked (GlcNAc...) asparagine glycosylation. A lipid anchor (GPI-anchor amidated serine) is attached at S459. Residues 460–476 (NSFVISKTPLWLAVLLF) constitute a propeptide, removed in mature form.

As to quaternary structure, homodimer.

The protein resides in the cell membrane. Its function is as follows. VSG forms a coat on the surface of the parasite. The trypanosome evades the immune response of the host by expressing a series of antigenically distinct VSGs from an estimated 1000 VSG genes. The polypeptide is Variant surface glycoprotein MITAT 1.2 (Trypanosoma brucei brucei).